Consider the following 528-residue polypeptide: Ankyrin repeat and death domain-containing protein 1B (528 aa).

ANK repeat units lie at residues 67 to 96 (PNERSFQNAAKSNNLDLMEKLFEKKVNINV), 100 to 129 (MNRTALHFAVGRNHLSAVDFLLKHKARVDV), 133 to 162 (HGLTVIHLAAWSGSLEVMLMLVKAGADQRA), 166 to 197 (DGMSALHFATQSNHVRIVEYLIQDLHLKDLNQ), 201 to 230 (KGRKPFLLAAERGHVEMIEKLTFLNLHTSE), 234 to 263 (GGNTALHLAAKHGHSPAVQVLLAQWQDINE), 267 to 296 (LNISSLQIATRNGHASLVNFLLSENVDLHQ), 300 to 329 (PKESPLHLVVINNHITVVNSLLSAQHDIDI), 333 to 362 (KQQTPLHVAADRGNVELVETLLKAGCDLKA), and 366 to 395 (QGKTALAVASRSNHSLVVGMLIKAERYYAW). The region spanning 427–515 (TLLWDLAYHQ…KLAEKTRHFK (89 aa)) is the Death domain.

The protein is Ankyrin repeat and death domain-containing protein 1B (ANKDD1B) of Homo sapiens (Human).